A 1014-amino-acid polypeptide reads, in one-letter code: MERGGYRGGRGDGRGRGGRGYGGGGGGGEQGRDRGYGGGEQGRGRGSERGGGNRGQGRGEQQDFRSQSQRGPPPGHGGRGTTQFQQPRPQVAPQPSQAPASYAGSVGGVAGRGAWGRKPQVPSDSASPSTSTTVVSEPVRVAEVMNLKPSVQVATSDRKEPMKRPDRGGVVAVRRVNLYVNHYKVNFNPESVIRHYDVEIKGEIPTKKVSRFELAMVRDKVFTDNPDEFPLAMTAYDGQKNIFSAVELPTGSYKVEYPKTEEMRGRSYTFTIKQVNVLKLGDLKEYMTGRSSFNPRDVLQGMDVVMKEHPSKCMITVGKSFFTRETEPDEDFRFGVIAAKGYRHTLKPTAQGLSLCLDYSVLAFRKAMSVIEYLKLYFNWSDMRQFRRRDVEEELIGLKVTVNHRKNKQKLTIVGLSMQNTKDIKFDLIDQEGNEPPRKTSIVEYFRIKYGRHIVHKDIPCLDLGKNGRQNFVPMEFCDLVEGQIYPKDNLDKDSALWLKKLSLVNPQQRQRNIDKMIKARNGPSGGEIIGNFGLKVDTNMTPVEGRVLKAPSLKLAERGRVVREEPNPRQNNQWNLMKKGVTRGSIVKHWAVLDFTASERFNKMPNDFVDNLIDRCWRLGMQMEAPIVYKTSRMETLSNGNAIEELLRSVIDEASRKHGGARPTLVLCAMSRKDDGYKTLKWIAETKLGLVTQCFLTGPATKGGDQYRANLALKMNAKVGGSNVELMDTFSFFKKEDEVMFIGADVNHPAARDKMSPSIVAVVGTLNWPEANRYAARVIAQPHRKEEIQGFGDACLELVKAHVQATGKRPNKIVIFRDGVSDAQFDMVLNVELLDVKLTFEKNGYNPKITVIVAQKRHQTRFFPATNNDGSDKGNVPSGTVVDTKVIHPYEYDFYLCSHHGGIGTSKPTHYYTLWDELGFTSDQVQKLIFEMCFTFTRCTKPVSLVPPVYYADMVAFRGRMYHEASSREKNFKQPRGASTSAASLASSLSSLTIEDKAIFKLHAELENVMFFV.

Residues 1-15 show a composition bias toward basic and acidic residues; that stretch reads MERGGYRGGRGDGRG. The tract at residues 1-137 is disordered; that stretch reads MERGGYRGGR…PSTSTTVVSE (137 aa). Gly residues-rich tracts occupy residues 18–29 and 49–58; these read GRGYGGGGGGGE and RGGGNRGQGR. The span at 83–104 shows a compositional bias: low complexity; sequence QFQQPRPQVAPQPSQAPASYAG. Over residues 105–114 the composition is skewed to gly residues; the sequence is SVGGVAGRGA. Over residues 121–137 the composition is skewed to low complexity; the sequence is VPSDSASPSTSTTVVSE. One can recognise a PAZ domain in the interval 369 to 482; it reads SVIEYLKLYF…VPMEFCDLVE (114 aa). The region spanning 666–965 is the Piwi domain; that stretch reads LVLCAMSRKD…VAFRGRMYHE (300 aa). Interaction with guide RNA regions lie at residues 857 to 858, 900 to 908, and 937 to 959; these read KR, HHGGIGTSK, and FTRC…VAFR.

Belongs to the argonaute family. Ago subfamily. Interacts with NERD.

Functionally, involved in RNA-mediated post-transcriptional gene silencing (PTGS). Main component of the RNA-induced silencing complex (RISC) that binds to a short guide RNA such as microRNA (miRNA) or small interfering RNA (siRNA). RISC uses the mature miRNA or siRNA as a guide for slicer-directed cleavage of homologous mRNAs to repress gene expression. Associates mainly with siRNAs of 21 nucleotide in length and preferentially recruits small RNAs with a 5' terminal adenosine. Probably involved in antiviral RNA silencing. Associates with siRNA derived from cucumber mosaic virus (CMV). Targeted by turnip yellows virus (TuYV) protein P0 (via F-box-like domain) for probable proteasome degradation and thereby inactivating AGO2 function in RNA silencing. Required to direct NERD-dependent DNA methylation and silencing. In Arabidopsis thaliana (Mouse-ear cress), this protein is Protein argonaute 2 (AGO2).